Reading from the N-terminus, the 272-residue chain is Shikimate dehydrogenase (NADP(+)) (272 aa).

Shikimate contacts are provided by residues 14-16 (SKS) and T61. K65 acts as the Proton acceptor in catalysis. E77 is a binding site for NADP(+). Shikimate-binding residues include N86 and D102. NADP(+)-binding positions include 126–130 (GAGGA), 149–154 (NRTVSR), and M213. Y215 is a binding site for shikimate. Residue G237 coordinates NADP(+).

This sequence belongs to the shikimate dehydrogenase family. As to quaternary structure, homodimer.

It catalyses the reaction shikimate + NADP(+) = 3-dehydroshikimate + NADPH + H(+). Its pathway is metabolic intermediate biosynthesis; chorismate biosynthesis; chorismate from D-erythrose 4-phosphate and phosphoenolpyruvate: step 4/7. Its function is as follows. Involved in the biosynthesis of the chorismate, which leads to the biosynthesis of aromatic amino acids. Catalyzes the reversible NADPH linked reduction of 3-dehydroshikimate (DHSA) to yield shikimate (SA). The sequence is that of Shikimate dehydrogenase (NADP(+)) from Shigella sonnei (strain Ss046).